We begin with the raw amino-acid sequence, 385 residues long: FAD-dependent monooxygenase verC2 (385 aa).

FAD-binding residues include Arg-27, Asp-227, and Ala-240. The N-linked (GlcNAc...) asparagine glycan is linked to Asn-320. Residues 365–385 traverse the membrane as a helical segment; sequence WKTTIMFIALLTIVVLIYSFI.

The protein belongs to the paxM FAD-dependent monooxygenase family. The cofactor is FAD.

It is found in the membrane. The protein operates within secondary metabolite biosynthesis; terpenoid biosynthesis. Its pathway is mycotoxin biosynthesis. FAD-dependent monooxygenase; part of the gene cluster that mediates the biosynthesis of the neurotoxin verrucosidin, a methylated alpha-pyrone polyketide that inhibits oxidative phosphorylation in mitochondria and thereby causes neurological diseases. The carbon backbone of verrucosidin is synthesized by the HR-PKS verA, and further modified by the other verrucodidin cluster enzymes. This Penicillium polonicum protein is FAD-dependent monooxygenase verC2.